Consider the following 319-residue polypeptide: Aspartate carbamoyltransferase catalytic subunit (319 aa).

2 residues coordinate carbamoyl phosphate: arginine 59 and threonine 60. Lysine 87 is a binding site for L-aspartate. The carbamoyl phosphate site is built by arginine 109, histidine 137, and glutamine 140. Residues arginine 170 and arginine 224 each coordinate L-aspartate. Positions 265 and 266 each coordinate carbamoyl phosphate.

Belongs to the aspartate/ornithine carbamoyltransferase superfamily. ATCase family. In terms of assembly, heterododecamer (2C3:3R2) of six catalytic PyrB chains organized as two trimers (C3), and six regulatory PyrI chains organized as three dimers (R2).

It carries out the reaction carbamoyl phosphate + L-aspartate = N-carbamoyl-L-aspartate + phosphate + H(+). The protein operates within pyrimidine metabolism; UMP biosynthesis via de novo pathway; (S)-dihydroorotate from bicarbonate: step 2/3. Functionally, catalyzes the condensation of carbamoyl phosphate and aspartate to form carbamoyl aspartate and inorganic phosphate, the committed step in the de novo pyrimidine nucleotide biosynthesis pathway. This is Aspartate carbamoyltransferase catalytic subunit from Gemmatimonas aurantiaca (strain DSM 14586 / JCM 11422 / NBRC 100505 / T-27).